The following is a 187-amino-acid chain: MATTSDLRTNMIIRYNGQLHRVVEFYHHAPGNWRAMVIMKLKNLETGKTIEERVRAGSEIEIVRVEKRPMQFLYRDGDVYHFMDTETFEQIEVPEEMIGEPAKFLKENEMADILFYDDNKILGVEPPLFVTLQVTEASVAVRGDTATNVNKQVTLETGAVISVPAFVNQGDYVRVDTRTGEYIERIK.

This sequence belongs to the elongation factor P family.

It is found in the cytoplasm. Its pathway is protein biosynthesis; polypeptide chain elongation. Its function is as follows. Involved in peptide bond synthesis. Stimulates efficient translation and peptide-bond synthesis on native or reconstituted 70S ribosomes in vitro. Probably functions indirectly by altering the affinity of the ribosome for aminoacyl-tRNA, thus increasing their reactivity as acceptors for peptidyl transferase. The polypeptide is Elongation factor P (Roseiflexus sp. (strain RS-1)).